The following is a 377-amino-acid chain: 5-hydroxytryptamine receptor 1D (377 aa).

3 N-linked (GlcNAc...) asparagine glycosylation sites follow: Asn5, Asn17, and Asn21. 3 helical membrane passes run 39 to 64 (ISLALLLSIITMATALSNAFVLTTIF), 76 to 97 (LIGSLAMTDLLVSILVMPISIA), and 110 to 134 (LCDIWLSSDITCCTASILHLCVIAL). Cysteines 111 and 188 form a disulfide. Serotonin-binding residues include Asp118 and Cys122. The short motif at 135-137 (DRY) is the DRY motif; important for ligand-induced conformation changes element. The next 4 membrane-spanning stretches (helical) occupy residues 155–176 (AAVMIATVWVISICISIPPLFW), 195–218 (ISYTIYSTCGAFYIPSVLLIILYG), 301–326 (KTLGIILGAFIVCWLPFFVASLVLPI), and 336–359 (ALFDFFTWLGYLNSLINPIIYTVF). Residue Ser321 participates in serotonin binding. The NPxxY motif; important for ligand-induced conformation changes and signaling motif lies at 352–356 (NPIIY).

The protein belongs to the G-protein coupled receptor 1 family. As to quaternary structure, homodimer. Heterodimer with HTR1B.

It is found in the cell membrane. G-protein coupled receptor for 5-hydroxytryptamine (serotonin). Also functions as a receptor for ergot alkaloid derivatives, various anxiolytic and antidepressant drugs and other psychoactive substances. Ligand binding causes a conformation change that triggers signaling via guanine nucleotide-binding proteins (G proteins) and modulates the activity of downstream effectors, such as adenylate cyclase. HTR1D is coupled to G(i)/G(o) G alpha proteins and mediates inhibitory neurotransmission by inhibiting adenylate cyclase activity. Regulates the release of 5-hydroxytryptamine in the brain, and thereby affects neural activity. May also play a role in regulating the release of other neurotransmitters. May play a role in vasoconstriction. This chain is 5-hydroxytryptamine receptor 1D (HTR1D), found in Canis lupus familiaris (Dog).